The following is a 145-amino-acid chain: Hemoglobin subunit beta-1 (145 aa).

Residues 1–145 form the Globin domain; it reads TFTNDESQHI…VEAALATGYH (145 aa). Heme b contacts are provided by His-62 and His-91.

The protein belongs to the globin family. In terms of assembly, major hemoglobin is a tetramer of two alpha-1 chains and two beta-1 chains. As to expression, red blood cells.

Functionally, involved in oxygen transport from the lung to the various peripheral tissues. This is Hemoglobin subunit beta-1 (HBB1) from Triturus cristatus (Great crested newt).